Here is a 251-residue protein sequence, read N- to C-terminus: Triosephosphate isomerase (251 aa).

A substrate-binding site is contributed by 9–11; the sequence is NWK. Residue H95 is the Electrophile of the active site. The Proton acceptor role is filled by E167. Substrate is bound by residues G173, S213, and 234-235; that span reads GG. S213 carries the phosphoserine modification.

Belongs to the triosephosphate isomerase family. As to quaternary structure, homodimer.

It is found in the cytoplasm. It catalyses the reaction D-glyceraldehyde 3-phosphate = dihydroxyacetone phosphate. The protein operates within carbohydrate biosynthesis; gluconeogenesis. It functions in the pathway carbohydrate degradation; glycolysis; D-glyceraldehyde 3-phosphate from glycerone phosphate: step 1/1. Its function is as follows. Involved in the gluconeogenesis. Catalyzes stereospecifically the conversion of dihydroxyacetone phosphate (DHAP) to D-glyceraldehyde-3-phosphate (G3P). This Bacillus cereus (strain ATCC 10987 / NRS 248) protein is Triosephosphate isomerase.